A 273-amino-acid chain; its full sequence is Endochitinase EP3 (273 aa).

Positions Met-1–Ala-28 are cleaved as a signal peptide. A glycan (N-linked (GlcNAc...) asparagine) is linked at Asn-24. The Chitin-binding type-1 domain occupies Gln-29 to Ala-63. 4 disulfide bridges follow: Cys-31–Cys-39, Cys-33–Cys-45, Cys-38–Cys-52, and Cys-56–Cys-61. N-linked (GlcNAc...) asparagine glycosylation occurs at Asn-47. A catalytic region spans residues Val-70–Cys-273. Glu-136 acts as the Proton donor in catalysis. N-linked (GlcNAc...) asparagine glycosylation is found at Asn-157 and Asn-270.

Belongs to the glycosyl hydrolase 19 family. Chitinase class I subfamily. Expressed in cells surrounding embryos, stems, seedlings, pollen, roots, shoots, inflorescence, flowers, siliques and leaves. Present in seedpods and seed embryos, but not in roots, inflorescence stems, leaves and flowers.

The enzyme catalyses Random endo-hydrolysis of N-acetyl-beta-D-glucosaminide (1-&gt;4)-beta-linkages in chitin and chitodextrins.. Probably involved in hypersensitive reaction upon Xanthomonas campestris infection. This is Endochitinase EP3 from Arabidopsis thaliana (Mouse-ear cress).